Here is a 304-residue protein sequence, read N- to C-terminus: Protein Largen (304 aa).

Low complexity predominate over residues 1 to 22 (MSAKSKGNPSSSSAAEGPPAAS). Disordered stretches follow at residues 1-27 (MSAKSKGNPSSSSAAEGPPAASKTKVK), 66-109 (QLED…PPAH), 114-133 (LTVLRKPNPPPPPPRLTPVR), and 236-304 (EPVH…TTTV). Residues 33–70 (IVEDLELVLGDLKDVAKELKEVVDQIDTLTSDLQLEDE) adopt a coiled-coil conformation. Over residues 77–91 (TDTLNSSSSGTTASS) the composition is skewed to low complexity. Pro residues-rich tracts occupy residues 120-129 (PNPPPPPPRL) and 275-289 (FPPPTPATVPPPAAP).

Its function is as follows. Regulator of cell size that promotes cell size increase independently of mTOR and Hippo signaling pathways. Acts by stimulating the translation of specific mRNAs, including those encoding proteins affecting mitochondrial functions. Increases mitochondrial mass and respiration. This is Protein Largen (Prr16) from Mus musculus (Mouse).